Reading from the N-terminus, the 1118-residue chain is Constitutive coactivator of PPAR-gamma-like protein 1 (1118 aa).

The interval 339–405 (PPHYLAARPG…SLSEPAPLTL (67 aa)) is interaction with YES1, SRC and FYN. A disordered region spans residues 374–533 (AKPVAPQVPS…GTVQPIPCLL (160 aa)). Residues 376 to 396 (PVAPQVPSPGGAPGQGPYPYS) are compositionally biased toward low complexity. Composition is skewed to polar residues over residues 405 to 420 (LDTS…SYSN) and 435 to 447 (SPIN…SPNH). Residues 481–502 (GWEKTGSHSEPQARGDPGDQTK) show a composition bias toward basic and acidic residues. Residues 503 to 514 (AEGSSTASSGSQ) are compositionally biased toward polar residues. Thr-655 is subject to Phosphothreonine. The RNA binding stretch occupies residues 829 to 1118 (ADQAAKVEKM…LEAAVLNKEE (290 aa)). An omega-N-methylarginine mark is found at Arg-873, Arg-884, and Arg-886. A disordered region spans residues 921–945 (AFSGSDSSRTSKSQGGVQPIPSQGG). Positions 924–936 (GSDSSRTSKSQGG) are enriched in polar residues. Position 932 is an N6-acetyllysine (Lys-932). Ser-960 is modified (phosphoserine). Arg-982 and Arg-986 each carry omega-N-methylarginine. The residue at position 1023 (Ser-1023) is a Phosphoserine. The interval 1025–1102 (EEVAKELKSK…HLNALSTDSA (78 aa)) is disordered. Basic and acidic residues predominate over residues 1026–1037 (EVAKELKSKSGE). The span at 1038 to 1051 (SKSSAMSSDGSLAE) shows a compositional bias: low complexity. A phosphoserine mark is found at Ser-1044, Ser-1045, and Ser-1048. Over residues 1076–1101 (HSESALNNDSKTCNTNPHLNALSTDS) the composition is skewed to polar residues.

The protein belongs to the constitutive coactivator of PPAR-gamma family. As to quaternary structure, interacts with PURA. Interacts with SRC family protein kinases YES1, SRC and FYN. Upon tyrosine phosphorylation, interacts with PIK3R1. Interacts with IGF2BP1/IMP-1 in an RNA-dependent manner. Arg-982 is dimethylated, probably to asymmetric dimethylarginine. Post-translationally, phosphorylated on tyrosine by SRC family protein kinases upon oxidative stress, for instance following UV irradiation. In terms of tissue distribution, widely expressed. In gastric mucosa, detected in the bottom region of the foveolar epithelium (at protein level).

The protein localises to the cytoplasm. It is found in the cell membrane. Its function is as follows. Component of the oxidative stress-induced survival signaling. May regulate the activation of SRC family protein kinases. May act as a scaffolding protein enabling SRC family protein kinases to phosphorylate and activate PI3-kinase. Binds IGF2 RNA and promotes the production of IGF2 protein. This Homo sapiens (Human) protein is Constitutive coactivator of PPAR-gamma-like protein 1 (FAM120A).